A 175-amino-acid chain; its full sequence is ATP-dependent protease subunit HslV (175 aa).

Thr2 is a catalytic residue. Residues Gly158, Cys161, and Thr164 each contribute to the Na(+) site.

The protein belongs to the peptidase T1B family. HslV subfamily. In terms of assembly, a double ring-shaped homohexamer of HslV is capped on each side by a ring-shaped HslU homohexamer. The assembly of the HslU/HslV complex is dependent on binding of ATP.

The protein localises to the cytoplasm. The enzyme catalyses ATP-dependent cleavage of peptide bonds with broad specificity.. Allosterically activated by HslU binding. Protease subunit of a proteasome-like degradation complex believed to be a general protein degrading machinery. In Haemophilus influenzae (strain 86-028NP), this protein is ATP-dependent protease subunit HslV.